We begin with the raw amino-acid sequence, 318 residues long: Putative HTH-type transcriptional regulatory protein MJ1164 (318 aa).

Positions 131-189 (LKEVREAMGISVGKLAEVAGVSRKAIYKYETQMANPSVDVALKIEEFLDVPLVKGIDLF) constitute an HTH cro/C1-type domain. Residues 142-161 (VGKLAEVAGVSRKAIYKYET) constitute a DNA-binding region (H-T-H motif).

The polypeptide is Putative HTH-type transcriptional regulatory protein MJ1164 (Methanocaldococcus jannaschii (strain ATCC 43067 / DSM 2661 / JAL-1 / JCM 10045 / NBRC 100440) (Methanococcus jannaschii)).